The sequence spans 670 residues: MNQSVHQRMQELEQLLNRYNQEYYENDEPSVPDAEYDRLFRELKTLETEHPDLKSAQSPTMKVGGKPLGQFRSVEHEVPMLSLDNAFSVDEFEAFSKRVEQRLDTNQTVTFCCEPKLDGAAVSLLYENGLLVRGATRGDGQSGEDITENVKTIRNVPLKLSGDVPERLEVRGEVVMPLGAFERFNEQARQREEKVFANPRNAAAGSLRQLDSRITAKRPLHFYAYSLGLISETTQLPDSHHQRLLQLKDWGLPVNIEIKTVDSVQGCDDYYEAILARRDTLNYDIDGVVFKVDSIRLQQDLGFVARAPRWAIARKFPAQEQLTTITGVDFQVGRTGAITPVARLEPVNVGGVTVSNATLHNADEIERLGVRIGDCVSIRRAGDVIPQVVSVIKDKRPENTKAIEFPQHCPICQSDIERVEGEAVARCTGGLYCAAQRKEAIKHFASRKAMDIDGLGDKIVEQLVERDWIKSPADLYRLSKAELATLPRMGAKSAENLRNAIKATQETTLARFIYALGIREVGEATANALANHFKNLDALIAAESEQLQEVPDVGAVVAKHIVAFFHEAHNQQVVAELREFISWPEGEEASSVQSDRLSGNTYVITGTLSTMTRDEAKSALEALGAKVASSVSKKTTALVAGENAGSKLTKAQSLGLDILDENALAELLSD.

NAD(+) contacts are provided by residues 33–37 (DAEYD), 82–83 (SL), and E114. The N6-AMP-lysine intermediate role is filled by K116. NAD(+) contacts are provided by R137, E173, K291, and K315. The Zn(2+) site is built by C409, C412, C427, and C433. A BRCT domain is found at 592-670 (VQSDRLSGNT…ENALAELLSD (79 aa)).

Belongs to the NAD-dependent DNA ligase family. LigA subfamily. The cofactor is Mg(2+). It depends on Mn(2+) as a cofactor.

It catalyses the reaction NAD(+) + (deoxyribonucleotide)n-3'-hydroxyl + 5'-phospho-(deoxyribonucleotide)m = (deoxyribonucleotide)n+m + AMP + beta-nicotinamide D-nucleotide.. DNA ligase that catalyzes the formation of phosphodiester linkages between 5'-phosphoryl and 3'-hydroxyl groups in double-stranded DNA using NAD as a coenzyme and as the energy source for the reaction. It is essential for DNA replication and repair of damaged DNA. This is DNA ligase from Idiomarina loihiensis (strain ATCC BAA-735 / DSM 15497 / L2-TR).